The following is a 388-amino-acid chain: Chorismate synthase (388 aa).

2 residues coordinate NADP(+): Arg-39 and Arg-45. The disordered stretch occupies residues 95–118 (EKNEKSRRVSRPRPGHADLVGGMK). FMN-binding positions include 130–132 (RSS), 251–252 (NA), Gly-296, 311–315 (KPIPT), and Arg-337.

The protein belongs to the chorismate synthase family. Homotetramer. FMNH2 is required as a cofactor.

The catalysed reaction is 5-O-(1-carboxyvinyl)-3-phosphoshikimate = chorismate + phosphate. It participates in metabolic intermediate biosynthesis; chorismate biosynthesis; chorismate from D-erythrose 4-phosphate and phosphoenolpyruvate: step 7/7. Functionally, catalyzes the anti-1,4-elimination of the C-3 phosphate and the C-6 proR hydrogen from 5-enolpyruvylshikimate-3-phosphate (EPSP) to yield chorismate, which is the branch point compound that serves as the starting substrate for the three terminal pathways of aromatic amino acid biosynthesis. This reaction introduces a second double bond into the aromatic ring system. The polypeptide is Chorismate synthase (Listeria monocytogenes serotype 4b (strain CLIP80459)).